A 100-amino-acid chain; its full sequence is Large ribosomal subunit protein uL23 (100 aa).

Belongs to the universal ribosomal protein uL23 family. As to quaternary structure, part of the 50S ribosomal subunit. Contacts protein L29, and trigger factor when it is bound to the ribosome.

In terms of biological role, one of the early assembly proteins it binds 23S rRNA. One of the proteins that surrounds the polypeptide exit tunnel on the outside of the ribosome. Forms the main docking site for trigger factor binding to the ribosome. This is Large ribosomal subunit protein uL23 from Mycobacterium tuberculosis (strain ATCC 25177 / H37Ra).